The following is a 364-amino-acid chain: Caffeic acid 3-O-methyltransferase 3 (364 aa).

Residue 129–135 coordinates substrate; sequence MNQDKVL. The interval 161-179 is substrate binding; that stretch reads AFEYHGTDPRFNKVFNKGM. S-adenosyl-L-methionine contacts are provided by Gly207, Asp230, Asp250, Met251, and Lys264. Catalysis depends on His268, which acts as the Proton acceptor.

It belongs to the class I-like SAM-binding methyltransferase superfamily. Cation-independent O-methyltransferase family. COMT subfamily. In terms of assembly, homodimer.

It catalyses the reaction (E)-caffeate + S-adenosyl-L-methionine = (E)-ferulate + S-adenosyl-L-homocysteine + H(+). It functions in the pathway aromatic compound metabolism; phenylpropanoid biosynthesis. In terms of biological role, catalyzes the conversion of caffeic acid to ferulic acid and of 5-hydroxyferulic acid to sinapic acid. The resulting products may subsequently be converted to the corresponding alcohols that are incorporated into lignins. The polypeptide is Caffeic acid 3-O-methyltransferase 3 (HOMT3) (Populus kitakamiensis (Aspen)).